The primary structure comprises 645 residues: Phosphomethylpyrimidine synthase (645 aa).

Residues Asn-235, Met-264, Tyr-293, His-329, 349–351 (SRG), 390–393 (DGLR), and Glu-429 each bind substrate. A Zn(2+)-binding site is contributed by His-433. Tyr-456 provides a ligand contact to substrate. His-497 contacts Zn(2+). The [4Fe-4S] cluster site is built by Cys-577, Cys-580, and Cys-585.

The protein belongs to the ThiC family. As to quaternary structure, homodimer. It depends on [4Fe-4S] cluster as a cofactor.

The enzyme catalyses 5-amino-1-(5-phospho-beta-D-ribosyl)imidazole + S-adenosyl-L-methionine = 4-amino-2-methyl-5-(phosphooxymethyl)pyrimidine + CO + 5'-deoxyadenosine + formate + L-methionine + 3 H(+). It participates in cofactor biosynthesis; thiamine diphosphate biosynthesis. In terms of biological role, catalyzes the synthesis of the hydroxymethylpyrimidine phosphate (HMP-P) moiety of thiamine from aminoimidazole ribotide (AIR) in a radical S-adenosyl-L-methionine (SAM)-dependent reaction. The protein is Phosphomethylpyrimidine synthase of Vibrio cholerae serotype O1 (strain ATCC 39541 / Classical Ogawa 395 / O395).